Reading from the N-terminus, the 1500-residue chain is Synaptonemal complex protein 2 (1500 aa).

A phosphoserine mark is found at serine 457 and serine 458. The residue at position 464 (threonine 464) is a Phosphothreonine. A Phosphoserine modification is found at serine 487. Phosphothreonine is present on threonine 496. Residues serine 500, serine 509, serine 518, and serine 527 each carry the phosphoserine modification. A disordered region spans residues lysine 512–threonine 548. Residues threonine 608 and threonine 633 each carry the phosphothreonine modification. Residues serine 646, serine 650, and serine 741 each carry the phosphoserine modification. The tract at residues asparagine 796–proline 820 is disordered. Serine 914 carries the phosphoserine modification. Threonine 916 is modified (phosphothreonine). Disordered regions lie at residues leucine 940–serine 1010 and lysine 1029–valine 1084. Residues asparagine 948 to arginine 958 show a composition bias toward basic residues. Over residues methionine 977 to threonine 989 the composition is skewed to basic and acidic residues. Residues arginine 990–lysine 1000 are compositionally biased toward basic residues. Basic and acidic residues predominate over residues proline 1059–serine 1076. Phosphoserine is present on residues serine 1115, serine 1117, serine 1124, serine 1133, serine 1140, serine 1144, serine 1156, serine 1159, and serine 1164. A Phosphothreonine modification is found at threonine 1168. 3 positions are modified to phosphoserine: serine 1183, serine 1213, and serine 1216. Positions tyrosine 1208–leucine 1234 are disordered. The span at cysteine 1217–asparagine 1228 shows a compositional bias: basic and acidic residues. Serine 1232, serine 1275, and serine 1277 each carry phosphoserine. At threonine 1313 the chain carries Phosphothreonine. Residues leucine 1388–glutamate 1429 are a coiled coil.

The protein belongs to the SYCP2 family. As to quaternary structure, component of the lateral elements of synaptonemal complexes. Heterodimer with SYCP3. Interacts with SMC1A and SMC3. Interacts with TEX11. In terms of processing, phosphorylated. In terms of tissue distribution, detected in testis and spermatocytes (at protein level).

The protein resides in the nucleus. It localises to the chromosome. Its function is as follows. Major component of the axial/lateral elements of synaptonemal complexes (SCS) during meiotic prophase. Plays a role in the assembly of synaptonemal complexes. Required for normal meiotic chromosome synapsis during oocyte and spermatocyte development and for normal male and female fertility. Required for insertion of SYCP3 into synaptonemal complexes. May be involved in the organization of chromatin by temporarily binding to DNA scaffold attachment regions. Requires SYCP3, but not SYCP1, in order to be incorporated into the axial/lateral elements. This Mus musculus (Mouse) protein is Synaptonemal complex protein 2 (Sycp2).